We begin with the raw amino-acid sequence, 510 residues long: Protein disulfide-isomerase (510 aa).

An N-terminal signal peptide occupies residues 1–19 (MLRRALLCLAVAAAPGLYA). Residues 20 to 136 (DAPEEEDHVL…IVNWLKKRTG (117 aa)) enclose the Thioredoxin 1 domain. Active-site nucleophile residues include cysteine 55 and cysteine 58. A disulfide bridge links cysteine 55 with cysteine 58. Lysine 202 carries the post-translational modification N6-acetyllysine. N6-succinyllysine is present on residues lysine 224 and lysine 273. 2 positions are modified to phosphoserine: serine 333 and serine 359. Positions 351–477 (GKIKPHLMSQ…FKKFLESGGQ (127 aa)) constitute a Thioredoxin 2 domain. Active-site nucleophile residues include cysteine 399 and cysteine 402. Cysteine 399 and cysteine 402 are oxidised to a cystine. Serine 429 is modified (phosphoserine). Residues 473–510 (ESGGQDGAGDDDDLEDLEEAEEPDMEEDDDQKAVKDEL) are disordered. The span at 480–502 (AGDDDDLEDLEEAEEPDMEEDDD) shows a compositional bias: acidic residues. The short motif at 507–510 (KDEL) is the Prevents secretion from ER element.

It belongs to the protein disulfide isomerase family. As to quaternary structure, heterodimer; heterodimerizes with the protein microsomal triglyceride transfer MTTP. Homodimer. Homodimer. Monomers and homotetramers may also occur. Interacts with P4HA2, forming a heterotetramer consisting of 2 alpha subunits (P4HA2) and 2 beta (P4HB), where P4HB plays the role of a structural subunit; this tetramer catalyzes the formation of 4-hydroxyproline in collagen. Also constitutes the structural subunit of the microsomal triacylglycerol transfer protein MTTP in mammalian cells. Stabilizes both enzymes and retain them in the ER without contributing to the catalytic activity. Binds UBQLN1. Interacts with ERO1B. Interacts with ILDR2. Interacts with ERN1/IRE1A (via N-terminus); the interaction is enhanced by phosphorylation of P4HB by FAM20C in response to endoplasmic reticulum stress and results in attenuation of ERN1 activity. Phosphorylation of Ser-359 by FAM20C is induced by endoplasmic reticulum stress and results in a functional switch from oxidoreductase to molecular chaperone. It also promotes interaction with ERN1.

The protein localises to the endoplasmic reticulum. The protein resides in the endoplasmic reticulum lumen. It localises to the melanosome. It is found in the cell membrane. It carries out the reaction Catalyzes the rearrangement of -S-S- bonds in proteins.. This multifunctional protein catalyzes the formation, breakage and rearrangement of disulfide bonds. At the cell surface, seems to act as a reductase that cleaves disulfide bonds of proteins attached to the cell. May therefore cause structural modifications of exofacial proteins. Inside the cell, seems to form/rearrange disulfide bonds of nascent proteins. At high concentrations and following phosphorylation by FAM20C, functions as a chaperone that inhibits aggregation of misfolded proteins. At low concentrations, facilitates aggregation (anti-chaperone activity). May be involved with other chaperones in the structural modification of the TG precursor in hormone biogenesis. Also acts as a structural subunit of various enzymes such as prolyl 4-hydroxylase and microsomal triacylglycerol transfer protein MTTP. Receptor for LGALS9; the interaction retains P4HB at the cell surface of Th2 T helper cells, increasing disulfide reductase activity at the plasma membrane, altering the plasma membrane redox state and enhancing cell migration. The sequence is that of Protein disulfide-isomerase (P4HB) from Macaca fuscata fuscata (Japanese macaque).